Reading from the N-terminus, the 131-residue chain is Peptide methionine sulfoxide reductase MsrB (131 aa).

In terms of domain architecture, MsrB spans 9–131 (DEDWKKELTP…NSASLKFQKE (123 aa)). Cys48, Cys51, Cys97, and Cys100 together coordinate Zn(2+). Cys120 acts as the Nucleophile in catalysis.

It belongs to the MsrB Met sulfoxide reductase family. Zn(2+) serves as cofactor.

It catalyses the reaction L-methionyl-[protein] + [thioredoxin]-disulfide + H2O = L-methionyl-(R)-S-oxide-[protein] + [thioredoxin]-dithiol. The polypeptide is Peptide methionine sulfoxide reductase MsrB (Leptospira interrogans serogroup Icterohaemorrhagiae serovar Lai (strain 56601)).